The sequence spans 368 residues: UV excision repair protein rhp23 (368 aa).

The Ubiquitin-like domain occupies Met1–Thr77. Low complexity-rich tracts occupy residues Lys76–Pro88 and Ala103–Ser124. The disordered stretch occupies residues Lys76 to Ala134. Residues Ser84 and Ser87 each carry the phosphoserine modification. 2 UBA domains span residues Pro135 to Gly185 and Gln320 to His360. The residue at position 364 (Ser364) is a Phosphoserine.

Its subcellular location is the nucleus. Its function is as follows. Involved in postreplication repair of UV-damaged DNA. Postreplication repair functions in gap-filling of a daughter strand on replication of damaged DNA. Protects ubiquitin chains against dissambly by deubiquitinating enzymes thereby promoting protein degradation. This chain is UV excision repair protein rhp23 (rhp23), found in Schizosaccharomyces pombe (strain 972 / ATCC 24843) (Fission yeast).